A 324-amino-acid polypeptide reads, in one-letter code: MAAAAPGNGRASAPRLLLLFLVPLLWAPAAVRAGPDEDLSHRNKEPPAPAQQLQPQPVAVQGPEPARVEKIFTPAAPVHTNKEDPATQTNLGFIHAFVAAISVIIVSELGDKTFFIAAIMAMRYNRLTVLAGAMLALGLMTCLSVLFGYATTVIPRVYTYYVSTVLFAIFGIRMLREGLKMSPDEGQEELEEVQAELKKKDEEFQRTKLLNGPGDVETGTSITVPQKKWLHFISPIFVQALTLTFLAEWGDRSQLTTIVLAAREDPYGVAVGGTVGHCLCTGLAVIGGRMIAQKISVRTVTIIGGIVFLAFAFSALFISPDSGF.

The first 33 residues, Met-1 to Ala-33, serve as a signal peptide directing secretion. Over Gly-34 to Thr-89 the chain is Lumenal. A compositionally biased stretch (basic and acidic residues) spans Pro-35 to Glu-45. The tract at residues Pro-35–Ala-59 is disordered. Low complexity predominate over residues Ala-50–Ala-59. The helical transmembrane segment at Asn-90 to Gly-110 threads the bilayer. Residues Asp-111–Arg-126 lie on the Cytoplasmic side of the membrane. The chain crosses the membrane as a helical span at residues Leu-127–Phe-147. The Lumenal segment spans residues Gly-148–Thr-151. A helical transmembrane segment spans residues Thr-152–Ile-172. Over Arg-173–Lys-228 the chain is Cytoplasmic. The stretch at Asp-184–Asn-211 forms a coiled coil. The helical transmembrane segment at Trp-229–Trp-249 threads the bilayer. Topologically, residues Gly-250–Tyr-267 are lumenal. A helical membrane pass occupies residues Gly-268–Gly-288. Topologically, residues Arg-289 to Thr-299 are cytoplasmic. A helical transmembrane segment spans residues Val-300 to Pro-320. The Lumenal segment spans residues Asp-321 to Phe-324.

Belongs to the GDT1 family. Ubiquitously expressed.

The protein localises to the golgi apparatus membrane. It catalyses the reaction Ca(2+)(in) + n H(+)(out) = Ca(2+)(out) + n H(+)(in). It carries out the reaction Mn(2+)(in) + n H(+)(out) = Mn(2+)(out) + n H(+)(in). Its function is as follows. Putative divalent cation:proton antiporter that exchanges calcium or manganese ions for protons across the Golgi membrane. Mediates the reversible transport of calcium or manganese to the Golgi lumen driven by the proton gradient and possibly the membrane potential generated by V-ATPase. Provides calcium or manganese cofactors to resident Golgi enzymes and contributes to the maintenance of an acidic luminal Golgi pH required for proper functioning of the secretory pathway. Promotes Ca(2+) storage within the Golgi lumen of the mammary epithelial cells to be then secreted into milk. The transport mechanism and stoichiometry remains to be elucidated. This chain is Putative divalent cation/proton antiporter TMEM165, found in Homo sapiens (Human).